The chain runs to 357 residues: Queuosine-tRNA galactosyltransferase (357 aa).

Belongs to the glycosyltransferase 2 family.

It localises to the cytoplasm. The enzyme catalyses queuosine(34) in tRNA(Tyr) + UDP-alpha-D-galactose = O-5''-beta-D-galactosylqueuosine(34) in tRNA(Tyr) + UDP + H(+). In terms of biological role, glycosyltransferase that specifically catalyzes galactosylation of cytoplasmic tRNA(Tyr) modified with queuosine at position 34 (queuosine(34)). Galactosylates the cyclopentene hydroxyl group of queuosine(34) in tRNA(Tyr) to form galactosyl-queuosine(34). Mannosylation of queuosine(34) in tRNA(Tyr) is required to slow-down elongation at cognate codons UAC and suppress stop codon readthrough, thereby regulating protein translation. The chain is Queuosine-tRNA galactosyltransferase from Rattus norvegicus (Rat).